A 326-amino-acid chain; its full sequence is Immune-associated nucleotide-binding protein 4 (326 aa).

The AIG1-type G domain maps to glutamate 17–glutamine 225. Positions glycine 26 to serine 33 are G1. Residues glycine 26–alanine 34 and serine 47 contribute to the GTP site. The G2 stretch occupies residues glycine 53–lysine 57. Positions aspartate 75–glycine 78 are G3. Residues threonine 145–aspartate 148 are G4. Residues aspartate 184 to arginine 186 form a G5 region. GTP is bound at residue asparagine 185. The stretch at threonine 217 to lysine 241 forms a coiled coil.

The protein belongs to the TRAFAC class TrmE-Era-EngA-EngB-Septin-like GTPase superfamily. AIG1/Toc34/Toc159-like paraseptin GTPase family. IAN subfamily. In terms of tissue distribution, expressed in radicles of the germinating seeds.

The protein is Immune-associated nucleotide-binding protein 4 of Arabidopsis thaliana (Mouse-ear cress).